The sequence spans 268 residues: Tubulin-specific chaperone C (268 aa).

Residues 98–255 (PAYTTTLKKH…SAFAFEDFDI (158 aa)) enclose the C-CAP/cofactor C-like domain.

It localises to the cytoplasm. The protein localises to the cytoskeleton. Functionally, tubulin-folding protein; involved in the early step of the tubulin folding pathway. The sequence is that of Tubulin-specific chaperone C (CIN2) from Saccharomyces cerevisiae (strain ATCC 204508 / S288c) (Baker's yeast).